Here is a 98-residue protein sequence, read N- to C-terminus: Large ribosomal subunit protein uL23 (98 aa).

This sequence belongs to the universal ribosomal protein uL23 family. In terms of assembly, part of the 50S ribosomal subunit. Contacts protein L29, and trigger factor when it is bound to the ribosome.

Functionally, one of the early assembly proteins it binds 23S rRNA. One of the proteins that surrounds the polypeptide exit tunnel on the outside of the ribosome. Forms the main docking site for trigger factor binding to the ribosome. The sequence is that of Large ribosomal subunit protein uL23 from Frankia alni (strain DSM 45986 / CECT 9034 / ACN14a).